Here is a 275-residue protein sequence, read N- to C-terminus: Elongation factor Ts (275 aa).

An involved in Mg(2+) ion dislocation from EF-Tu region spans residues 76 to 79 (TDFV).

This sequence belongs to the EF-Ts family.

It is found in the cytoplasm. Its function is as follows. Associates with the EF-Tu.GDP complex and induces the exchange of GDP to GTP. It remains bound to the aminoacyl-tRNA.EF-Tu.GTP complex up to the GTP hydrolysis stage on the ribosome. This chain is Elongation factor Ts, found in Mycolicibacterium paratuberculosis (strain ATCC BAA-968 / K-10) (Mycobacterium paratuberculosis).